Consider the following 348-residue polypeptide: 4-hydroxyphenylpyruvate dioxygenase (348 aa).

VOC domains are found at residues 11–141 and 151–303; these read GFAF…ITSS and AIDH…IFTE. Positions 154, 232, and 312 each coordinate Fe cation.

Belongs to the 4HPPD family. The cofactor is Fe cation.

It carries out the reaction 3-(4-hydroxyphenyl)pyruvate + O2 = homogentisate + CO2. Functionally, catalyzes the transformation of p-hydroxyphenylpyruvate into HGA. Has hemolytic and brown pigment production activity. This Legionella pneumophila (strain Corby) protein is 4-hydroxyphenylpyruvate dioxygenase (lly).